A 380-amino-acid polypeptide reads, in one-letter code: MTKPLRIGIVAGEISGDILGAGFIRAIKAQYPDAEFVGVAGPRMEAEGCKALFDMEELAVMGIVEVLGRLPRLLKVKAELVKYFTENPPDVFVGIDAPDFNLRLELDLKQHGIKTVHYVSPSVWAWRQKRIFKIEAATNLVLAFLPFEKAFYDKFNVPCEFVGHTMADAIPLETDKAAAQALLNLDGSKRWLAVLPGSRGSEMGMLAAPFIETCKLLKQKHPDLGFVVALVNEKRREQFQLAWQETAPELDFVLVNDTARNVMIASDAVLLASGTVALECMLVGRPMVVGYKVKPLTAWIIRRLVKTKYVSLANILADKPLVTELLQEDCVPEKLSAEVDRILSSDNTELLSEFSIMHQSIKCDADNRAAHAVLSLINKV.

Belongs to the LpxB family.

The catalysed reaction is a lipid X + a UDP-2-N,3-O-bis[(3R)-3-hydroxyacyl]-alpha-D-glucosamine = a lipid A disaccharide + UDP + H(+). Its pathway is bacterial outer membrane biogenesis; LPS lipid A biosynthesis. Functionally, condensation of UDP-2,3-diacylglucosamine and 2,3-diacylglucosamine-1-phosphate to form lipid A disaccharide, a precursor of lipid A, a phosphorylated glycolipid that anchors the lipopolysaccharide to the outer membrane of the cell. The polypeptide is Lipid-A-disaccharide synthase (Photobacterium profundum (strain SS9)).